The chain runs to 246 residues: NAD-dependent protein deacylase (246 aa).

Residues 1 to 245 (MKEFITKHRD…ELIREILDNP (245 aa)) enclose the Deacetylase sirtuin-type domain. 20-39 (GAGISAESGIPTFRGSEGLW) serves as a coordination point for NAD(+). Substrate is bound by residues tyrosine 64 and arginine 67. 98–101 (QNVD) provides a ligand contact to NAD(+). Histidine 116 acts as the Proton acceptor in catalysis. Zn(2+)-binding residues include cysteine 124, cysteine 127, cysteine 146, and cysteine 149. Residues 186–188 (GTS), 212–214 (NPE), and threonine 230 contribute to the NAD(+) site.

Belongs to the sirtuin family. Class III subfamily. The cofactor is Zn(2+).

It localises to the cytoplasm. It carries out the reaction N(6)-acetyl-L-lysyl-[protein] + NAD(+) + H2O = 2''-O-acetyl-ADP-D-ribose + nicotinamide + L-lysyl-[protein]. The catalysed reaction is N(6)-succinyl-L-lysyl-[protein] + NAD(+) + H2O = 2''-O-succinyl-ADP-D-ribose + nicotinamide + L-lysyl-[protein]. Functionally, NAD-dependent lysine deacetylase and desuccinylase that specifically removes acetyl and succinyl groups on target proteins. Modulates the activities of several proteins which are inactive in their acylated form. The chain is NAD-dependent protein deacylase from Leptospira interrogans serogroup Icterohaemorrhagiae serovar Lai (strain 56601).